A 409-amino-acid chain; its full sequence is Arginine deiminase (409 aa).

Cys-399 (amidino-cysteine intermediate) is an active-site residue.

It belongs to the arginine deiminase family.

It is found in the cytoplasm. It carries out the reaction L-arginine + H2O = L-citrulline + NH4(+). The protein operates within amino-acid degradation; L-arginine degradation via ADI pathway; carbamoyl phosphate from L-arginine: step 1/2. This chain is Arginine deiminase, found in Streptococcus pneumoniae (strain JJA).